A 315-amino-acid polypeptide reads, in one-letter code: Ribosomal protein L11 methyltransferase (315 aa).

Residues Thr-163, Gly-184, Asp-206, and Asn-248 each contribute to the S-adenosyl-L-methionine site.

Belongs to the methyltransferase superfamily. PrmA family.

It localises to the cytoplasm. The catalysed reaction is L-lysyl-[protein] + 3 S-adenosyl-L-methionine = N(6),N(6),N(6)-trimethyl-L-lysyl-[protein] + 3 S-adenosyl-L-homocysteine + 3 H(+). Its function is as follows. Methylates ribosomal protein L11. This chain is Ribosomal protein L11 methyltransferase, found in Lacticaseibacillus paracasei (strain ATCC 334 / BCRC 17002 / CCUG 31169 / CIP 107868 / KCTC 3260 / NRRL B-441) (Lactobacillus paracasei).